Consider the following 291-residue polypeptide: ATP synthase gamma chain (291 aa).

This sequence belongs to the ATPase gamma chain family. In terms of assembly, F-type ATPases have 2 components, CF(1) - the catalytic core - and CF(0) - the membrane proton channel. CF(1) has five subunits: alpha(3), beta(3), gamma(1), delta(1), epsilon(1). CF(0) has three main subunits: a, b and c.

It is found in the cell inner membrane. Functionally, produces ATP from ADP in the presence of a proton gradient across the membrane. The gamma chain is believed to be important in regulating ATPase activity and the flow of protons through the CF(0) complex. The sequence is that of ATP synthase gamma chain from Ruegeria pomeroyi (strain ATCC 700808 / DSM 15171 / DSS-3) (Silicibacter pomeroyi).